Consider the following 438-residue polypeptide: tRNA wybutosine-synthesizing protein 2 homolog (438 aa).

S-adenosyl-L-methionine contacts are provided by residues serine 209, lysine 216, glutamate 256, and 284–285; that span reads DN.

The protein belongs to the class I-like SAM-binding methyltransferase superfamily. TRM5/TYW2 family.

It carries out the reaction 4-demethylwyosine(37) in tRNA(Phe) + S-adenosyl-L-methionine = 4-demethyl-7-[(3S)-3-amino-3-carboxypropyl]wyosine(37) in tRNA(Phe) + S-methyl-5'-thioadenosine + H(+). The protein operates within tRNA modification; wybutosine-tRNA(Phe) biosynthesis. Its function is as follows. S-adenosyl-L-methionine-dependent transferase that acts as a component of the wybutosine biosynthesis pathway. Wybutosine is a hyper modified guanosine with a tricyclic base found at the 3'-position adjacent to the anticodon of eukaryotic phenylalanine tRNA. Catalyzes the transfer of the alpha-amino-alpha-carboxypropyl (acp) group from S-adenosyl-L-methionine to the C-7 position of 4-demethylwyosine (imG-14) to produce wybutosine-86. The polypeptide is tRNA wybutosine-synthesizing protein 2 homolog (TRMT12) (Bos taurus (Bovine)).